The primary structure comprises 197 residues: MSWGRLSRLLKPALLCGALAAPGLAGTMCASRDDWRCARSMHEFSAKDIDGHMVCLDKYRGFVCIVTNVASQUGKTDVNYTQLVDLHARYAECGLRILAFPCNQFGRQEPGSNQEIKEFAAGYNVKFDMYSKICVNGDDAHPLWKWMKVQPKGRGMLGNAIKWNFTKFLIDKNGCVVKRYGPMEEPQVIEKDLPCYL.

Ser-40 carries the post-translational modification Phosphoserine. Sec-73 is a catalytic residue. Position 73 (Sec-73) is a non-standard amino acid, selenocysteine.

Belongs to the glutathione peroxidase family. Monomer. Has a tendency to form higher mass oligomers. Interacts with FUNDC1; this interaction promotes GPX4 recruitment into mitochondria through TOM/TIM complex where it is degraded by mitophagy. In terms of tissue distribution, widely expressed with the highest levels in testis, heart, cerebrum, ileum, stomach, liver, jejunum and epididymis. Expressed primarily in testis and sperm midpiece (at protein level). Expressed in brain (at protein level). Expressed in heart, liver and kidney (at protein level). Expressed in retina, especially in inner segments of photoreceptor cells (at protein level). As to expression, highly expressed during embryogenesis. Down-regulated between 14.5 dpc and 17.5 dpc. Highly expressed during embryogenesis. In contrast to isoform Mitochondrial and isoform Nuclear, which are down-regulated between 14.5 dpc and 17.5 dpc, remains constant. In terms of tissue distribution, mainly expressed in sperm. Weakly expressed during embryogenesis. Down-regulated between 14.5 dpc and 17.5 dpc.

Its subcellular location is the mitochondrion. The protein localises to the cytoplasm. It is found in the nucleus. It catalyses the reaction a hydroperoxy polyunsaturated fatty acid + 2 glutathione = a hydroxy polyunsaturated fatty acid + glutathione disulfide + H2O. It carries out the reaction 2 glutathione + H2O2 = glutathione disulfide + 2 H2O. The catalysed reaction is tert-butyl hydroperoxide + 2 glutathione = tert-butanol + glutathione disulfide + H2O. The enzyme catalyses cumene hydroperoxide + 2 glutathione = 2-phenylpropan-2-ol + glutathione disulfide + H2O. It catalyses the reaction (9S)-hydroperoxy-(10E,12Z)-octadecadienoate + 2 glutathione = (9S)-hydroxy-(10E,12Z)-octadecadienoate + glutathione disulfide + H2O. It carries out the reaction (13S)-hydroperoxy-(9Z,11E)-octadecadienoate + 2 glutathione = (13S)-hydroxy-(9Z,11E)-octadecadienoate + glutathione disulfide + H2O. The catalysed reaction is (5S)-hydroperoxy-(6E,8Z,11Z,14Z)-eicosatetraenoate + 2 glutathione = (5S)-hydroxy-(6E,8Z,11Z,14Z)-eicosatetraenoate + glutathione disulfide + H2O. The enzyme catalyses (12R)-hydroperoxy-(5Z,8Z,10E,14Z)-eicosatetraenoate + 2 glutathione = (12R)-hydroxy-(5Z,8Z,10E,14Z)-eicosatetraenoate + glutathione disulfide + H2O. It catalyses the reaction (12S)-hydroperoxy-(5Z,8Z,10E,14Z)-eicosatetraenoate + 2 glutathione = (12S)-hydroxy-(5Z,8Z,10E,14Z)-eicosatetraenoate + glutathione disulfide + H2O. It carries out the reaction (15S)-hydroperoxy-(5Z,8Z,11Z,13E)-eicosatetraenoate + 2 glutathione = (15S)-hydroxy-(5Z,8Z,11Z,13E)-eicosatetraenoate + glutathione disulfide + H2O. The catalysed reaction is (5S)-hydroperoxy-(6E,8Z,11Z,14Z,17Z)-eicosapentaenoate + 2 glutathione = (5S)-hydroxy-(6E,8Z,11Z,14Z,17Z)-eicosapentaenoate + glutathione disulfide + H2O. The enzyme catalyses (12S)-hydroperoxy-(5Z,8Z,10E,14Z,17Z)-eicosapentaenoate + 2 glutathione = (12S)-hydroxy-(5Z,8Z,10E,14Z,17Z)-eicosapentaenoate + glutathione disulfide + H2O. It catalyses the reaction (15S)-hydroperoxy-(5Z,8Z,11Z,13E,17Z)-eicosapentaenoate + 2 glutathione = (15S)-hydroxy-(5Z,8Z,11Z,13E,17Z)-eicosapentaenoate + glutathione disulfide + H2O. It carries out the reaction (15S)-hydroperoxy-(11Z,13E)-eicosadienoate + 2 glutathione = (15S)-hydroxy-(11Z,13E)-eicosadienoate + glutathione disulfide + H2O. The catalysed reaction is (17S)-hydroperoxy-(4Z,7Z,10Z,13Z,15E,19Z)-docosahexaenoate + 2 glutathione = (17S)-hydroxy-(4Z,7Z,10Z,13Z,15E,19Z)-docosahexaenoate + glutathione disulfide + H2O. The enzyme catalyses a hydroperoxy-1,2-diacyl-glycero-3-phosphocholine + 2 glutathione = a hydroxy-1,2-diacyl-glycero-3-phosphocholine + glutathione disulfide + H2O. Essential antioxidant peroxidase that directly reduces phospholipid hydroperoxide even if they are incorporated in membranes and lipoproteins. Can also reduce fatty acid hydroperoxide, cholesterol hydroperoxide and thymine hydroperoxide. Plays a key role in protecting cells from oxidative damage by preventing membrane lipid peroxidation. Required to prevent cells from ferroptosis, a non-apoptotic cell death resulting from an iron-dependent accumulation of lipid reactive oxygen species. The presence of selenocysteine (Sec) versus Cys at the active site is essential for life: it provides resistance to overoxidation and prevents cells against ferroptosis. The presence of Sec at the active site is also essential for the survival of a specific type of parvalbumin-positive interneurons, thereby preventing against fatal epileptic seizures. May be required to protect cells from the toxicity of ingested lipid hydroperoxides. Required for normal sperm development and male fertility. Essential for maturation and survival of photoreceptor cells. Plays a role in a primary T-cell response to viral and parasitic infection by protecting T-cells from ferroptosis and by supporting T-cell expansion. Plays a role of glutathione peroxidase in platelets in the arachidonic acid metabolism. Reduces hydroperoxy ester lipids formed by a 15-lipoxygenase that may play a role as down-regulator of the cellular 15-lipoxygenase pathway. Can also reduce small soluble hydroperoxides such as H2O2 and tert-butyl hydroperoxide. In terms of biological role, specifically able to suppress the production of leukotriene and prostaglandin in response to several stimuli by reducing fatty acid hydroperoxide. Functionally, specifically required to prevent mitochondrial cell death by mediating reduction of cardiolipin hydroperoxide. Also required for normal sperm development and male fertility. Its function is as follows. Required for male fertility by stabilizing the condensed chromatin in sperm nuclei. The protein is Phospholipid hydroperoxide glutathione peroxidase GPX4 of Mus musculus (Mouse).